The primary structure comprises 332 residues: Ephrin-B2a (332 aa).

Residues 1 to 24 (MGDSLWRYYFGVLVIACKVNLSRA) form the signal peptide. N-linked (GlcNAc...) asparagine glycosylation is found at N20 and N33. Residues 25-161 (LILDSIYWNT…TKSMKIIMKV (137 aa)) form the Ephrin RBD domain. Topologically, residues 25 to 225 (LILDSIYWNT…VIGSEVALFA (201 aa)) are extracellular. Cystine bridges form between C59/C98 and C86/C150. Residue N136 is glycosylated (N-linked (GlcNAc...) asparagine). A disordered region spans residues 162-212 (GQNPSDPISPKDYPTSYPPKHPDLGGKDSKSNEVLKPDASPHGEDKGDGNK). The span at 181 to 210 (KHPDLGGKDSKSNEVLKPDASPHGEDKGDG) shows a compositional bias: basic and acidic residues. The N-linked (GlcNAc...) asparagine glycan is linked to N211. Residues 226–246 (CIASASVIVIIIIIMLVFLLL) form a helical membrane-spanning segment. Residues 247–332 (KYRRRHRKHS…QSPANIYYKV (86 aa)) lie on the Cytoplasmic side of the membrane. A disordered region spans residues 255–285 (HSPQHATTLSLSTLATPKRGGSGGNNNGSEP). Positions 260–270 (ATTLSLSTLAT) are enriched in low complexity. A PDZ-binding motif is present at residues 330 to 332 (YKV).

Belongs to the ephrin family. Binds to the receptor tyrosine kinase ephb4. Inducible phosphorylation of tyrosine residues in the cytoplasmic domain.

The protein resides in the cell membrane. Its function is as follows. Cell surface transmembrane ligand for Eph receptors, a family of receptor tyrosine kinases which are crucial for migration, repulsion and adhesion during neuronal, vascular and epithelial development. Binds promiscuously Eph receptors residing on adjacent cells, leading to contact-dependent bidirectional signaling into neighboring cells. The signaling pathway downstream of the receptor is referred to as forward signaling while the signaling pathway downstream of the ephrin ligand is referred to as reverse signaling. Together with ephb4 may play a central role in heart morphogenesis and angiogenesis through regulation of cell adhesion and cell migration. The sequence is that of Ephrin-B2a (efnb2a) from Danio rerio (Zebrafish).